A 323-amino-acid chain; its full sequence is uncharacterized protein (323 aa).

It belongs to the glycosyltransferase 2 family.

This is an uncharacterized protein from Haemophilus influenzae (strain ATCC 51907 / DSM 11121 / KW20 / Rd).